Consider the following 280-residue polypeptide: Meiotic driver wtf35 (280 aa).

The segment covering 1–29 has biased composition (basic and acidic residues); the sequence is MKNKDYPLRTSMDELSTKNDNEIDLEKGP. Disordered regions lie at residues 1–49 and 64–100; these read MKNK…DLNN and NKSTTPPDYDENRLPITDEGNNPPNTHRENHSSGTTD. 4 consecutive transmembrane segments (helical) span residues 105–125, 142–162, 184–204, and 218–238; these read FLIKLLISFTSIILFNAPAVC, WTLIGFWCASSLIIFTFSWYF, IPMAFSEVFLFNILVGSPRVA, and SLADHIIFAILSILVFIVETV.

The protein belongs to the WTF family. As to quaternary structure, homomer. Forms protein aggregates. The two isoforms can interact with each other and with themselves. High sequence similarity is required for their interaction.

The protein localises to the spore membrane. The protein resides in the vacuole membrane. Its subcellular location is the ascus epiplasm. It localises to the cytoplasm. It is found in the endoplasmic reticulum membrane. Functionally, promotes unequal transmission of alleles from the parental zygote to progeny spores by acting as poison/antidote system where the poison and antidote proteins are produced from the same locus; the poison component is trans-acting and targets all spores within an ascus whereas the antidote component is spore-specific, leading to poisoning of all progeny that do not inherit the allele. In terms of biological role, localizes isoform 2 to the vacuole thereby facilitating its degradation. Its function is as follows. Forms toxic aggregates that disrupt spore maturation. This chain is Meiotic driver wtf35, found in Schizosaccharomyces pombe (Fission yeast).